The chain runs to 427 residues: Lipophilic envelope-spanning tunnel protein A (427 aa).

At Met-1–Thr-75 the chain is on the cytoplasmic side. Residues Met-76 to Ile-96 traverse the membrane as a helical segment. The Periplasmic segment spans residues Arg-97–Met-120. Residues Val-121–Phe-141 form a helical membrane-spanning segment. Residues Gly-142–Ala-269 are Cytoplasmic-facing. A helical transmembrane segment spans residues Leu-270–Leu-290. Residues Asn-291–Asn-310 lie on the Periplasmic side of the membrane. Residues Ile-311–Val-331 traverse the membrane as a helical segment. Residues Met-332 to Arg-350 are Cytoplasmic-facing. Residues Ile-351–Ile-371 form a helical membrane-spanning segment. The Periplasmic segment spans residues Ser-372–Gln-382. The helical transmembrane segment at Ile-383–Ile-403 threads the bilayer. Over Leu-404–Asp-427 the chain is Cytoplasmic.

Belongs to the PqiA family. In terms of assembly, may interact with LetB in the inner membrane.

The protein localises to the cell inner membrane. Could be part, together with LetB, of a system that transports lipids between the inner membrane and the outer membrane. Contributes to membrane integrity. This chain is Lipophilic envelope-spanning tunnel protein A, found in Escherichia coli (strain K12).